The sequence spans 90 residues: Probable Fe(2+)-trafficking protein (90 aa).

This sequence belongs to the Fe(2+)-trafficking protein family.

In terms of biological role, could be a mediator in iron transactions between iron acquisition and iron-requiring processes, such as synthesis and/or repair of Fe-S clusters in biosynthetic enzymes. The chain is Probable Fe(2+)-trafficking protein from Saccharophagus degradans (strain 2-40 / ATCC 43961 / DSM 17024).